A 1437-amino-acid polypeptide reads, in one-letter code: CRISPR-associated endoribonuclease Cas13a (1437 aa).

HEPN-like fold stretches follow at residues 460–626 (LNAS…AMFE) and 1101–1437 (EFRD…QLKN). Residues 1377–1419 (EVKEKKKPSDNNTGKGYSKRDRQQDRKEYDKYKEKKKKEGNFL) are disordered. The segment covering 1394–1416 (SKRDRQQDRKEYDKYKEKKKKEG) has biased composition (basic and acidic residues).

Belongs to the CRISPR-associated endoribonuclease Cas13a family. Requires a divalent metal cation as cofactor.

With respect to regulation, target RNA acts as an activator for non-specific ssRNA degradation. CRISPR (clustered regularly interspaced short palindromic repeat), is an adaptive immune system that provides protection against mobile genetic elements (viruses, transposable elements and conjugative plasmids). CRISPR clusters contain sequences complementary to antecedent mobile elements and target invading nucleic acids. Unlike many single-component effectors, this CRISPR-Cas system targets RNA. CRISPR clusters are transcribed from pre-CRISPR RNA (crRNA) and processed into crRNA by this protein. Cleaves linear target ssRNA in a pre-crRNA-dependent fashion, preferentially around A residues. Binding a viable target RNA target activates this protein for non-specific RNA degradation in vitro (called collateral RNA degradation), but it is not very sensitive as it requires nanomolar levels of viable target RNA. In Lachnospiraceae bacterium (strain NK4A179), this protein is CRISPR-associated endoribonuclease Cas13a.